The sequence spans 200 residues: ATP-dependent Clp protease proteolytic subunit 1 (200 aa).

Residue Ser-98 is the Nucleophile of the active site. Residue His-123 is part of the active site.

The protein belongs to the peptidase S14 family. In terms of assembly, fourteen ClpP subunits assemble into 2 heptameric rings which stack back to back to give a disk-like structure with a central cavity, resembling the structure of eukaryotic proteasomes.

The protein resides in the cytoplasm. The catalysed reaction is Hydrolysis of proteins to small peptides in the presence of ATP and magnesium. alpha-casein is the usual test substrate. In the absence of ATP, only oligopeptides shorter than five residues are hydrolyzed (such as succinyl-Leu-Tyr-|-NHMec, and Leu-Tyr-Leu-|-Tyr-Trp, in which cleavage of the -Tyr-|-Leu- and -Tyr-|-Trp bonds also occurs).. Functionally, cleaves peptides in various proteins in a process that requires ATP hydrolysis. Has a chymotrypsin-like activity. Plays a major role in the degradation of misfolded proteins. The polypeptide is ATP-dependent Clp protease proteolytic subunit 1 (Mycobacterium leprae (strain TN)).